The sequence spans 934 residues: 2-oxoglutarate dehydrogenase E1 component (934 aa).

Positions 515-537 (RAAQDKIDKSDKMDNPDMERPES) are enriched in basic and acidic residues. The tract at residues 515 to 544 (RAAQDKIDKSDKMDNPDMERPESLQEPLQS) is disordered.

Belongs to the alpha-ketoglutarate dehydrogenase family. In terms of assembly, homodimer. Part of the 2-oxoglutarate dehydrogenase (OGDH) complex composed of E1 (2-oxoglutarate dehydrogenase), E2 (dihydrolipoamide succinyltransferase) and E3 (dihydrolipoamide dehydrogenase); the complex contains multiple copies of the three enzymatic components (E1, E2 and E3). Requires thiamine diphosphate as cofactor.

The catalysed reaction is N(6)-[(R)-lipoyl]-L-lysyl-[protein] + 2-oxoglutarate + H(+) = N(6)-[(R)-S(8)-succinyldihydrolipoyl]-L-lysyl-[protein] + CO2. In terms of biological role, E1 component of the 2-oxoglutarate dehydrogenase (OGDH) complex which catalyzes the decarboxylation of 2-oxoglutarate, the first step in the conversion of 2-oxoglutarate to succinyl-CoA and CO(2). In Staphylococcus haemolyticus (strain JCSC1435), this protein is 2-oxoglutarate dehydrogenase E1 component.